A 603-amino-acid chain; its full sequence is Arginine--tRNA ligase (603 aa).

Residues proline 143–histidine 153 carry the 'HIGH' region motif.

It belongs to the class-I aminoacyl-tRNA synthetase family. As to quaternary structure, monomer.

It is found in the cytoplasm. It carries out the reaction tRNA(Arg) + L-arginine + ATP = L-arginyl-tRNA(Arg) + AMP + diphosphate. This chain is Arginine--tRNA ligase, found in Prochlorococcus marinus (strain MIT 9303).